We begin with the raw amino-acid sequence, 722 residues long: Bifunctional UDP-N-acetylglucosamine 2-epimerase/N-acetylmannosamine kinase (722 aa).

UDP is bound by residues arginine 19, serine 23, arginine 113, histidine 220, and asparagine 253. 4 residues coordinate CMP-N-acetyl-beta-neuraminate: lysine 259, glutamate 271, lysine 280, and histidine 281. UDP-binding residues include valine 282, serine 301, serine 302, glutamate 307, and arginine 321. The N-acetylmannosamine kinase stretch occupies residues 406 to 722 (TLSALAVDLG…VLDYTTRRIH (317 aa)). Aspartate 413 provides a ligand contact to Mg(2+). An N-acyl-D-mannosamine 6-phosphate is bound at residue glycine 416. The ADP site is built by threonine 417, asparagine 418, and arginine 420. Residues glycine 476, arginine 477, threonine 489, asparagine 516, aspartate 517, and glycine 545 each contribute to the an N-acyl-D-mannosamine 6-phosphate site. The an N-acyl-D-mannosamine site is built by glycine 476, arginine 477, threonine 489, asparagine 516, and aspartate 517. Aspartate 517 is an active-site residue. Residues glutamate 566 and histidine 569 each contribute to the an N-acyl-D-mannosamine site. Residue histidine 569 coordinates an N-acyl-D-mannosamine 6-phosphate. Residues histidine 569, cysteine 579, cysteine 581, and cysteine 586 each contribute to the Zn(2+) site. Glutamate 588 provides a ligand contact to an N-acyl-D-mannosamine 6-phosphate. Glutamate 588 is a binding site for an N-acyl-D-mannosamine.

In the N-terminal section; belongs to the UDP-N-acetylglucosamine 2-epimerase family. The protein in the C-terminal section; belongs to the ROK (NagC/XylR) family. Homodimer. Homotetramer. Homohexamer. The hexameric form exhibits both enzyme activities, whereas the dimeric form only catalyzes the phosphorylation of N-acyl-D-mannosamine. Phosphorylated. Phosphorylation by PKC activates the UDP-N-acetylglucosamine 2-epimerase activity. Widely expressed. Highest expression is observed in liver.

It localises to the cytoplasm. The protein resides in the cytosol. It carries out the reaction UDP-N-acetyl-alpha-D-glucosamine + H2O = aldehydo-N-acetyl-D-mannosamine + UDP + H(+). The enzyme catalyses an N-acyl-D-mannosamine + ATP = an N-acyl-D-mannosamine 6-phosphate + ADP + H(+). The protein operates within amino-sugar metabolism; N-acetylneuraminate biosynthesis. With respect to regulation, the UDP-N-acetylglucosamine 2-epimerase activity, in contrast to the N-acetylmannosamine kinase activity, exhibits allosteric regulation by cytidine monophosphate-N-acetylneuraminic acid (CMP-Neu5Ac), the end product of neuraminic acid biosynthesis. Moreover, the activity is contingent upon the oligomeric state of the enzyme. The monomeric form is inactive, while the dimeric form selectively catalyzes the phosphorylation of N-acetylmannosamine. The hexameric form, on the other hand, demonstrates full proficiency in both enzyme activities. Furthermore, the UDP-N-acetylglucosamine 2-epimerase activity is increased by PKC-mediated phosphorylation. Bifunctional enzyme that possesses both UDP-N-acetylglucosamine 2-epimerase and N-acetylmannosamine kinase activities, and serves as the initiator of the biosynthetic pathway leading to the production of N-acetylneuraminic acid (NeuAc), a critical precursor in the synthesis of sialic acids. By catalyzing this pivotal and rate-limiting step in sialic acid biosynthesis, this enzyme assumes a pivotal role in governing the regulation of cell surface sialylation. Sialic acids represent a category of negatively charged sugars that reside on the surface of cells as terminal components of glycoconjugates and mediate important functions in various cellular processes, including cell adhesion, signal transduction, and cellular recognition. This chain is Bifunctional UDP-N-acetylglucosamine 2-epimerase/N-acetylmannosamine kinase, found in Rattus norvegicus (Rat).